We begin with the raw amino-acid sequence, 282 residues long: Thiazole synthase (282 aa).

Catalysis depends on K113, which acts as the Schiff-base intermediate with DXP. 1-deoxy-D-xylulose 5-phosphate contacts are provided by residues G174, 201-202 (AG), and 223-224 (NT).

It belongs to the ThiG family. Homotetramer. Forms heterodimers with either ThiH or ThiS.

Its subcellular location is the cytoplasm. It catalyses the reaction [ThiS sulfur-carrier protein]-C-terminal-Gly-aminoethanethioate + 2-iminoacetate + 1-deoxy-D-xylulose 5-phosphate = [ThiS sulfur-carrier protein]-C-terminal Gly-Gly + 2-[(2R,5Z)-2-carboxy-4-methylthiazol-5(2H)-ylidene]ethyl phosphate + 2 H2O + H(+). The protein operates within cofactor biosynthesis; thiamine diphosphate biosynthesis. Its function is as follows. Catalyzes the rearrangement of 1-deoxy-D-xylulose 5-phosphate (DXP) to produce the thiazole phosphate moiety of thiamine. Sulfur is provided by the thiocarboxylate moiety of the carrier protein ThiS. In vitro, sulfur can be provided by H(2)S. In Cupriavidus metallidurans (strain ATCC 43123 / DSM 2839 / NBRC 102507 / CH34) (Ralstonia metallidurans), this protein is Thiazole synthase.